A 205-amino-acid chain; its full sequence is Ras-related and estrogen-regulated growth inhibitor-like protein (205 aa).

Residues 1–205 (MSNFLHLKYN…NVFGKRRKSV (205 aa)) are small GTPase-like. GTP-binding positions include 11–18 (EKSVSVTK), 58–64 (DPCSQTQ), and 123–126 (NKRD).

Belongs to the small GTPase superfamily. Ras family.

It catalyses the reaction GTP + H2O = GDP + phosphate + H(+). Functionally, binds GDP/GTP and may possess intrinsic GTPase activity. The polypeptide is Ras-related and estrogen-regulated growth inhibitor-like protein (RERGL) (Homo sapiens (Human)).